A 116-amino-acid chain; its full sequence is Probable non-functional immunoglobulin kappa variable 3-7 (116 aa).

An N-terminal signal peptide occupies residues 1 to 21; that stretch reads MEAPAQLLFLLLLWLPDTTRE. Positions 21–43 are framework-1; the sequence is EIVMTQSPPTLSLSPGERVTLSC. The Ig-like domain occupies 22–116; it reads IVMTQSPPTL…YYCQQDYNLP (95 aa). Residues C43 and C109 are joined by a disulfide bond. A complementarity-determining-1 region spans residues 44 to 55; sequence RASQSVSSSYLT. The segment at 56 to 70 is framework-2; that stretch reads WYQQKPGQAPRLLIY. Residues 71-77 are complementarity-determining-2; the sequence is GASTRAT. The interval 78–109 is framework-3; that stretch reads SIPARFSGSGSGTDFTLTISSLQPEDFAVYYC. The tract at residues 110–116 is complementarity-determining-3; the sequence is QQDYNLP.

In terms of assembly, immunoglobulins are composed of two identical heavy chains and two identical light chains; disulfide-linked.

The protein resides in the secreted. It is found in the cell membrane. Its function is as follows. Probable non-functional open reading frame (ORF) of V region of the variable domain of immunoglobulin light chains. Non-functional ORF generally cannot participate in the synthesis of a productive immunoglobulin chain due to altered V-(D)-J or switch recombination and/or splicing site (at mRNA level) and/or conserved amino acid change (protein level). Immunoglobulins, also known as antibodies, are membrane-bound or secreted glycoproteins produced by B lymphocytes. In the recognition phase of humoral immunity, the membrane-bound immunoglobulins serve as receptors which, upon binding of a specific antigen, trigger the clonal expansion and differentiation of B lymphocytes into immunoglobulins-secreting plasma cells. Secreted immunoglobulins mediate the effector phase of humoral immunity, which results in the elimination of bound antigens. The antigen binding site is formed by the variable domain of one heavy chain, together with that of its associated light chain. Thus, each immunoglobulin has two antigen binding sites with remarkable affinity for a particular antigen. The variable domains are assembled by a process called V-(D)-J rearrangement and can then be subjected to somatic hypermutations which, after exposure to antigen and selection, allow affinity maturation for a particular antigen. The protein is Probable non-functional immunoglobulin kappa variable 3-7 of Homo sapiens (Human).